The primary structure comprises 1091 residues: MAPSAVGLLVFLLQAALALNPEDPNVCSHWESYAVTVQESYAHPFDQIYYTRCADILNWFKCTRHRISYKTAYRRGLRTMYRRRSQCCPGYYENGDFCIPLCTEECMHGRCVSPDTCHCEPGWGGPDCSSGCDSEHWGPHCSNRCQCQNGALCNPITGACVCAPGFRGWRCEELCAPGTHGKGCQLLCQCHHGASCDPRTGECLCAPGYTGVYCEELCPPGSHGAHCELRCPCQNGGTCHHITGECACPPGWTGAVCAQPCPPGTFGQNCSQDCPCHHGGQCDHVTGQCHCTAGYMGDRCQEECPFGTFGFLCSQRCDCHNGGQCSPATGACECEPGYKGPSCQERLCPEGLHGPGCTLPCPCDTENTISCHPVTGACTCQPGWSGHYCNESCPAGYYGNGCQLPCTCQNGADCHSITGSCTCAPGFMGEVCAVPCAAGTYGPNCSSVCSCSNGGTCSPVDGSCTCREGWQGLDCSLPCPSGTWGLNCNETCICANGAACSPFDGSCACTPGWLGDSCELPCPDGTFGLNCSEHCDCSHADGCDPVTGHCCCLAGWTGIRCDSTCPPGRWGPNCSVSCSCENGGSCSPEDGSCECAPGFRGPLCQRICPPGFYGHGCAQPCPLCVHSRGPCHHISGICECLPGFSGALCNQVCAGGHFGQDCAQLCSCANNGTCSPIDGSCQCFPGWIGKDCSQACPSGFWGSACFHTCSCHNGASCSAEDGACHCTPGWTGLFCTQRCPSAFFGKDCGHICQCQNGASCDHITGKCTCRTGFSGRHCEQRCAPGTFGYGCQQLCECMNNATCDHVTGTCYCSPGFKGIRCDQAALMMDELNPYTKISPALGAERHSVGAVTGIVLLLFLVVVLLGLFAWRRRRQKEKGRDLAPRVSYTPAMRMTSTDYSLSDLSQSSSHAQCFSNASYHTLACGGPATSQASTLDRNSPTKLSNKSLDRDTAGWTPYSYVNVLDSHFQISALEARYPPEDFYIELRHLSRHAEPHSPGTCGMDRRQNTYIMDKGFKDYMKESVCSSSTCSLNSSENPYATIKDPPILTCKLPESSYVEMKSPVHLGSPYTDVPSLSTSNKNIYEVGRCLT.

Positions 1-18 are cleaved as a signal peptide; that stretch reads MAPSAVGLLVFLLQAALA. Residues 19-847 are Extracellular-facing; the sequence is LNPEDPNVCS…SPALGAERHS (829 aa). In terms of domain architecture, EMI spans 23-100; it reads DPNVCSHWES…YYENGDFCIP (78 aa). 14 disulfide bridges follow: cysteine 27–cysteine 88, cysteine 53–cysteine 62, cysteine 87–cysteine 98, cysteine 102–cysteine 117, cysteine 119–cysteine 128, cysteine 145–cysteine 153, cysteine 147–cysteine 160, cysteine 162–cysteine 171, cysteine 184–cysteine 196, cysteine 190–cysteine 203, cysteine 205–cysteine 214, cysteine 227–cysteine 239, cysteine 233–cysteine 246, and cysteine 248–cysteine 257. 9 EGF-like domains span residues 94 to 129, 142 to 172, 180 to 215, 223 to 258, 266 to 301, 314 to 344, 398 to 433, 441 to 476, and 484 to 519; these read NGDFCIPLCTEECMHGRCVSPDTCHCEPGWGGPDCS, SNRCQCQNGALCNPITGACVCAPGFRGWRCE, HGKGCQLLCQCHHGASCDPRTGECLCAPGYTGVYCE, HGAHCELRCPCQNGGTCHHITGECACPPGWTGAVCA, FGQNCSQDCPCHHGGQCDHVTGQCHCTAGYMGDRCQ, SQRCDCHNGGQCSPATGACECEPGYKGPSCQ, YGNGCQLPCTCQNGADCHSITGSCTCAPGFMGEVCA, YGPNCSSVCSCSNGGTCSPVDGSCTCREGWQGLDCS, and WGLNCNETCICANGAACSPFDGSCACTPGWLGDSCE. Residue asparagine 269 is glycosylated (N-linked (GlcNAc...) asparagine). Disulfide bonds link cysteine 270–cysteine 282, cysteine 276–cysteine 289, cysteine 291–cysteine 300, cysteine 317–cysteine 325, cysteine 319–cysteine 332, cysteine 334–cysteine 343, cysteine 402–cysteine 414, cysteine 408–cysteine 421, cysteine 423–cysteine 432, cysteine 445–cysteine 457, cysteine 451–cysteine 464, cysteine 466–cysteine 475, cysteine 488–cysteine 500, cysteine 494–cysteine 507, and cysteine 509–cysteine 518. The N-linked (GlcNAc...) asparagine glycan is linked to asparagine 530. 6 consecutive EGF-like domains span residues 570 to 605, 613 to 650, 658 to 693, 706 to 736, 749 to 779, and 787 to 822; these read WGPNCSVSCSCENGGSCSPEDGSCECAPGFRGPLCQ, YGHGCAQPCPLCVHSRGPCHHISGICECLPGFSGALCN, FGQDCAQLCSCANNGTCSPIDGSCQCFPGWIGKDCS, FHTCSCHNGASCSAEDGACHCTPGWTGLFCT, GHICQCQNGASCDHITGKCTCRTGFSGRHCE, and FGYGCQQLCECMNNATCDHVTGTCYCSPGFKGIRCD. 18 cysteine pairs are disulfide-bonded: cysteine 574–cysteine 586, cysteine 580–cysteine 593, cysteine 595–cysteine 604, cysteine 617–cysteine 631, cysteine 621–cysteine 638, cysteine 640–cysteine 649, cysteine 662–cysteine 674, cysteine 668–cysteine 681, cysteine 683–cysteine 692, cysteine 709–cysteine 717, cysteine 711–cysteine 724, cysteine 726–cysteine 735, cysteine 752–cysteine 760, cysteine 754–cysteine 767, cysteine 769–cysteine 778, cysteine 791–cysteine 803, cysteine 797–cysteine 810, and cysteine 812–cysteine 821. The helical transmembrane segment at 848–868 threads the bilayer; the sequence is VGAVTGIVLLLFLVVVLLGLF. Topologically, residues 869–1091 are cytoplasmic; the sequence is AWRRRRQKEK…NIYEVGRCLT (223 aa).

Belongs to the MEGF family. As to quaternary structure, homomer. Does not interact with MEGF10.

It is found in the cell membrane. Its subcellular location is the basolateral cell membrane. Its function is as follows. May regulate the mosaic spacing of specific neuron subtypes in the retina through homotypic retinal neuron repulsion. Mosaics provide a mechanism to distribute each cell type evenly across the retina, ensuring that all parts of the visual field have access to a full set of processing elements. The sequence is that of Multiple epidermal growth factor-like domains protein 11 (Megf11) from Mus musculus (Mouse).